Reading from the N-terminus, the 329-residue chain is MNTEAKRIAVSGAAGQIAYSLLFRIAQGDLLGEDQPVILQLLDLPQAYGAVQGVVMELQDCAFPLLKEIQVATDPHAAFLNADYAFLVGSKPRTKGMERRDLLAENAAIFRTQGRALNEAASRDVKVLVVGNPANTNASILRRFAPDLPDDAISAMIRLDHNRAVSMLAQRCNVDVDSIADMVVWGNHSPTMFPDYRHARIGRRLVKDLINDENWYRESFIPKVAQRGTAIIEARGASSAASAANAAIDQMRDWIFGSDGRWVSMSVPSDGSYGIAPGLMFGVPVICDGGRYERVKDIGIDAFARQRIDLSVRELQEEADVVNRLFADR.

12-18 (GAAGQIA) contributes to the NAD(+) binding site. Substrate-binding residues include Arg93 and Arg99. NAD(+)-binding positions include Asn106, Gln113, and 130–132 (VGN). Residues Asn132 and Arg163 each coordinate substrate. Catalysis depends on His188, which acts as the Proton acceptor.

The protein belongs to the LDH/MDH superfamily. MDH type 2 family.

It carries out the reaction (S)-malate + NAD(+) = oxaloacetate + NADH + H(+). Functionally, catalyzes the reversible oxidation of malate to oxaloacetate. This is Malate dehydrogenase 2 from Burkholderia thailandensis (strain ATCC 700388 / DSM 13276 / CCUG 48851 / CIP 106301 / E264).